Consider the following 2170-residue polypeptide: Supervillin (2170 aa).

The segment at 1–167 (MKRKERIARR…NSRHSRTESG (167 aa)) is interaction with MYLK. 5 disordered regions span residues 37–94 (EDTP…HSLE), 107–327 (RRRQ…QSES), 413–444 (PEPL…NKDL), 511–546 (DYTG…GAEA), and 567–643 (RASK…EDEE). Serine 50 bears the Phosphoserine mark. 2 stretches are compositionally biased toward polar residues: residues 63-73 (PGSSLEKQTPS) and 81-90 (GIHSSGSMDT). The span at 134 to 166 (SRKDPDVTERRGKSDKQEEQSKDANSRHSRTES) shows a compositional bias: basic and acidic residues. The span at 167–195 (GPRTSLVASQDCTPLGSNMSDQEQLLNVE) shows a compositional bias: polar residues. 3 positions are modified to phosphoserine: serine 220, serine 227, and serine 241. Residues 230–241 (QIPSSPLQQPAS) show a composition bias toward polar residues. 2 stretches are compositionally biased toward basic and acidic residues: residues 261 to 272 (PTHEWFLQRDSE) and 286 to 297 (KVREKLVKEESA). Positions 298–313 (RSSPELTSESLTQRRQ) are enriched in polar residues. A phosphoserine mark is found at serine 299 and serine 300. Positions 427–444 (EDDRLVRGHKDPSGNKDL) are enriched in basic and acidic residues. Composition is skewed to basic and acidic residues over residues 570–582 (KKPE…ERSA) and 606–615 (ESRKTSERFR). Phosphoserine is present on residues serine 632, serine 666, serine 728, and serine 761. A disordered region spans residues 743-771 (ASAHQKALARDQANEGRESAEPGEPDSST). Basic and acidic residues predominate over residues 750-762 (LARDQANEGRESA). Position 809 is a phosphotyrosine (tyrosine 809). Threonine 811 carries the phosphothreonine modification. Residues serine 857, serine 877, and serine 881 each carry the phosphoserine modification. The tract at residues 887-909 (AWRPLVEHSGSKGMPGESGKTES) is disordered. 4 positions are modified to phosphoserine: serine 960, serine 1011, serine 1031, and serine 1077. Residues 1117-1137 (HTQEVEQSLKKKRVTESRESQ) are disordered. The span at 1119-1137 (QEVEQSLKKKRVTESRESQ) shows a compositional bias: basic and acidic residues. At arginine 1159 the chain carries Omega-N-methylarginine. Serine 1181 and serine 1184 each carry phosphoserine. At threonine 1186 the chain carries Phosphothreonine. Phosphoserine occurs at positions 1190, 1278, and 1361. Residues 1375–1643 (SNINLRSVNL…KFLDWTELKR (269 aa)) form an interaction with NEB region. Gelsolin-like repeat units follow at residues 1397-1496 (KKLM…LGGQ), 1516-1638 (IETN…FLDW), 1708-1818 (VSVD…FQGG), 1837-1938 (WRLY…LGRR), and 1971-2078 (ATEF…FPSW). In terms of domain architecture, HP spans 2107-2170 (KLCKTIYPLA…VNLKKSKGLF (64 aa)).

Belongs to the villin/gelsolin family. As to quaternary structure, associates with F-actin. Interacts with NEB. Interacts with MYH9. Interacts with MYLK. Interacts with TASOR. In terms of assembly, interacts with TRIP6. Interacts with DYNLT1. Interacts with KIF14; at midbody during cytokinesis. As to expression, expressed in the heart, tongue and granular cells within the cerebellum.

The protein localises to the cell membrane. The protein resides in the cytoplasm. Its subcellular location is the cytoskeleton. It localises to the cell projection. It is found in the invadopodium. The protein localises to the podosome. The protein resides in the midbody. Its subcellular location is the cleavage furrow. Forms a high-affinity link between the actin cytoskeleton and the membrane. Is among the first costameric proteins to assemble during myogenesis and it contributes to myogenic membrane structure and differentiation. Appears to be involved in myosin II assembly. May modulate myosin II regulation through MLCK during cell spreading, an initial step in cell migration. May play a role in invadopodial function. In terms of biological role, may be involved in modulation of focal adhesions. Supervillin-mediated down-regulation of focal adhesions involves binding to TRIP6. Plays a role in cytokinesis through KIF14 interaction. The sequence is that of Supervillin (Svil) from Mus musculus (Mouse).